The chain runs to 37 residues: Kappa-actitoxin-Bgr1a (37 aa).

A ShKT domain is found at 2 to 37 (CRDWFKETACRHAKSLGNCRTSQKYRANCAKTCELC). Cystine bridges form between Cys-2–Cys-37, Cys-11–Cys-30, and Cys-20–Cys-34. A crucial for binding to potassium channels region spans residues 25-26 (KY).

This sequence belongs to the sea anemone type 1 potassium channel toxin family. Type 1b subfamily.

It is found in the secreted. The protein localises to the nematocyst. In terms of biological role, inhibits voltage-dependent potassium channels of the Kv1 family (Kv1.1/KCNA1 (Kd=6 nM), Kv1.2/KCNA2 (Kd=15 nM), Kv1.3/KCNA3 (Kd=10-39 nM), Kv1.6/KCNA6, and KCa3.1/KCNN4 (Kd=172 nM)). This is Kappa-actitoxin-Bgr1a from Bunodosoma granuliferum (Red warty sea anemone).